The following is a 262-amino-acid chain: Catechol O-methyltransferase domain-containing protein 1 (262 aa).

Residues 12–32 (AALALGSAALGAAFATGLFLG) traverse the membrane as a helical; Signal-anchor for type II membrane protein segment. S-adenosyl-L-methionine is bound by residues aspartate 108, 110-111 (GT), serine 116, glutamate 134, valine 135, alanine 163, aspartate 185, aspartate 187, and tyrosine 194.

The protein belongs to the class I-like SAM-binding methyltransferase superfamily. Cation-dependent O-methyltransferase family. As to quaternary structure, homodimer.

The protein localises to the membrane. Putative O-methyltransferase. The chain is Catechol O-methyltransferase domain-containing protein 1 (COMTD1) from Homo sapiens (Human).